Reading from the N-terminus, the 165-residue chain is MYIEIVDETGLVSEEIIKQTQDILEFAAQKTGKEKKEMAVTFVTNERSHELNLEYRDTDRPTDVISLEYKPELDIAVDEEDLLNHPELAEMLDDFDAYIGELFISVDKAREQAEEYGHSFKREMGFLAVHGFLHINGYDHYTPEEEAEMFGLQEEILTAYGLTRE.

Residues His130, His134, and His140 each contribute to the Zn(2+) site.

The protein belongs to the endoribonuclease YbeY family. Zn(2+) is required as a cofactor.

It is found in the cytoplasm. Its function is as follows. Single strand-specific metallo-endoribonuclease involved in late-stage 70S ribosome quality control and in maturation of the 3' terminus of the 16S rRNA. This is Endoribonuclease YbeY from Streptococcus gordonii (strain Challis / ATCC 35105 / BCRC 15272 / CH1 / DL1 / V288).